A 301-amino-acid chain; its full sequence is Rhodopsin (301 aa).

The Extracellular segment spans residues 1-18; it reads LHMIHLHWYQYPPMNPMM. Residues 19–43 traverse the membrane as a helical segment; it reads YPLLLIFMFITGIPCLAGNFVTIWV. Topologically, residues 44–55 are cytoplasmic; sequence FMTTKSLRSPAN. Residues 56-78 form a helical membrane-spanning segment; it reads LLVVNLAMSDFLMMFTMFPPMMI. Topologically, residues 79-92 are extracellular; it reads TCYYHTWTLGPTFC. C92 and C169 are disulfide-bonded. A helical membrane pass occupies residues 93-115; sequence QVYAFLGNLFGCTSIWTMVFITF. The short motif at 116–118 is the 'Ionic lock' involved in activated form stabilization element; it reads DRY. Residues 116-134 lie on the Cytoplasmic side of the membrane; sequence DRYNVIVKGVAGEPLSNKK. A helical membrane pass occupies residues 135-155; that stretch reads AALWILSAWVLSFSWCSAPFF. Over 156-182 the chain is Extracellular; sequence GWNRYVPEGNLTGCGTDYLSEDALSRS. N165 carries N-linked (GlcNAc...) asparagine glycosylation. A helical membrane pass occupies residues 183-204; that stretch reads YLYVYSVWVYFLPLLITIYCYV. The Cytoplasmic portion of the chain corresponds to 205 to 245; the sequence is FIIKAVAAHEKGMRDQAKKMGIKSLRNEEAQKTSAECRLAK. The chain crosses the membrane as a helical span at residues 246–267; sequence IAMTTVALWFIAWTPYLLINWV. The Extracellular portion of the chain corresponds to 268-278; sequence GMFARSYLSPV. The helical transmembrane segment at 279–300 threads the bilayer; it reads YTIWGYVFAKANAVYNPIVYAI. At K288 the chain carries N6-(retinylidene)lysine.

The protein belongs to the G-protein coupled receptor 1 family. Opsin subfamily. Homodimer. Interacts with GNAQ. Contains one covalently linked retinal chromophore.

Its subcellular location is the cell projection. The protein localises to the rhabdomere membrane. Its function is as follows. Photoreceptor required for image-forming vision at low light intensity. Can use both retinal and 3-dehydroretinal as visual pigment. Light-induced isomerization of 11-cis to all-trans retinal triggers a conformational change that activates signaling via G-proteins. Signaling via GNAQ probably mediates the activation of phospholipase C. This is Rhodopsin (RHO) from Cambarellus shufeldtii (Cajun dwarf crayfish).